The following is a 374-amino-acid chain: Tuliposide A-converting enzyme b2, amyloplastic (374 aa).

The N-terminal 68 residues, 1–68, are a transit peptide targeting the amyloplast; the sequence is MSVALFCGPP…TNSSLSPSPT (68 aa). S226 (acyl-ester intermediate) is an active-site residue. Active-site charge relay system residues include D316 and H348.

The protein belongs to the AB hydrolase superfamily. Homodimer. Highly expressed in pistil and bulb scales. Lower expression in stem, and barely detected in root, leaf, petal and stamen.

The protein resides in the plastid. It localises to the amyloplast. The catalysed reaction is 6-tuliposide A = tulipalin A + D-glucose. Functionally, lactone-forming carboxylesterases, specifically catalyzing intramolecular transesterification, but not hydrolysis. Involved in the biosynthesis of tulipalins, defensive chemicals that show antimicrobial activities against a broad range of strains of bacteria and fungi. Substrates are 6-tuliposide A &gt; 6-tuliposide B. This chain is Tuliposide A-converting enzyme b2, amyloplastic (TCEA-B2), found in Tulipa gesneriana (Garden tulip).